The chain runs to 421 residues: Serine hydroxymethyltransferase (421 aa).

(6S)-5,6,7,8-tetrahydrofolate is bound by residues leucine 121 and 125–127 (GHL). Residue lysine 229 is modified to N6-(pyridoxal phosphate)lysine.

The protein belongs to the SHMT family. In terms of assembly, homodimer. Pyridoxal 5'-phosphate is required as a cofactor.

It is found in the cytoplasm. It carries out the reaction (6R)-5,10-methylene-5,6,7,8-tetrahydrofolate + glycine + H2O = (6S)-5,6,7,8-tetrahydrofolate + L-serine. It functions in the pathway one-carbon metabolism; tetrahydrofolate interconversion. It participates in amino-acid biosynthesis; glycine biosynthesis; glycine from L-serine: step 1/1. In terms of biological role, catalyzes the reversible interconversion of serine and glycine with tetrahydrofolate (THF) serving as the one-carbon carrier. This reaction serves as the major source of one-carbon groups required for the biosynthesis of purines, thymidylate, methionine, and other important biomolecules. Also exhibits THF-independent aldolase activity toward beta-hydroxyamino acids, producing glycine and aldehydes, via a retro-aldol mechanism. The sequence is that of Serine hydroxymethyltransferase from Haemophilus influenzae (strain ATCC 51907 / DSM 11121 / KW20 / Rd).